The primary structure comprises 630 residues: Probable potassium transport system protein Kup 2 (630 aa).

The next 12 membrane-spanning stretches (helical) occupy residues 17 to 37 (FWAL…TSPL), 56 to 76 (VIVL…VTAK), 108 to 128 (VFLM…SMIT), 145 to 165 (PALE…LFAF), 176 to 196 (AFGP…LIHI), 214 to 234 (FMLS…LAVT), 255 to 275 (WLFF…ALVL), 293 to 313 (FLVP…QAVI), 345 to 365 (IYLP…VLLF), 375 to 395 (YGIA…VVIW), 402 to 422 (PAAA…FFSA), and 427 to 447 (LLEG…LIWV).

It belongs to the HAK/KUP transporter (TC 2.A.72) family.

It localises to the cell inner membrane. The enzyme catalyses K(+)(in) + H(+)(in) = K(+)(out) + H(+)(out). Functionally, transport of potassium into the cell. Likely operates as a K(+):H(+) symporter. The sequence is that of Probable potassium transport system protein Kup 2 from Rhodopseudomonas palustris (strain BisB18).